Here is a 130-residue protein sequence, read N- to C-terminus: Small ribosomal subunit protein uS9 (130 aa).

Belongs to the universal ribosomal protein uS9 family.

This chain is Small ribosomal subunit protein uS9, found in Geotalea uraniireducens (strain Rf4) (Geobacter uraniireducens).